The sequence spans 634 residues: Sodium-dependent neutral amino acid transporter B(0)AT1 (634 aa).

The Cytoplasmic segment spans residues 1–41 (MVRLVLPNPGLDTRILSLAELETIEQEEASSRPKWDNKAQY). Residue S17 is modified to Phosphoserine. Residues 42–62 (LLTCVGFCVGLGNVWRFPYLC) form a helical membrane-spanning segment. Over 63–65 (QSH) the chain is Extracellular. A helical transmembrane segment spans residues 66–86 (GGGAFMIPFLILLVLEGIPLL). The Cytoplasmic portion of the chain corresponds to 87 to 120 (HLEFAIGQRLRRGSLGVWSSIHPALKGVGLTSML). Residues 121 to 141 (VSFVVGLYYNTIISWIMWYLF) traverse the membrane as a helical segment. The Extracellular segment spans residues 142–192 (NSFQEPLPWSECPLNENQTGYVDECARSSPVDYFWYRETLNISTSISDSGS). N-linked (GlcNAc...) asparagine glycans are attached at residues N158 and N182. A helical transmembrane segment spans residues 193–213 (IQWRMLLCLACAWSVLYMCTI). The Cytoplasmic segment spans residues 214–221 (RGIETTGK). The chain crosses the membrane as a helical span at residues 222–242 (VVYITSTLPYVVLTIFLIRGL). Topologically, residues 243–268 (TLKGATKGIIYLFTPNVTELANPVTW) are extracellular. N258 carries an N-linked (GlcNAc...) asparagine glycan. Residues 269-289 (LDAGAQVFFSFSLAFGGLISF) traverse the membrane as a helical segment. Over 290-304 (SSYNSVHNNCERDSV) the chain is Cytoplasmic. The helical transmembrane segment at 305–325 (IVSIINGFTSVYVAIVIYSII) threads the bilayer. The Extracellular portion of the chain corresponds to 326–413 (GFRATQRYDD…TEAITKMPVS (88 aa)). N354 and N368 each carry an N-linked (GlcNAc...) asparagine glycan. The chain crosses the membrane as a helical span at residues 414–434 (PLWSVLFFIMLFCLGLSSMFG). Over 435 to 456 (NMEGVVVPLQDLKVIPPKWPKE) the chain is Cytoplasmic. Residues 457-477 (LLTGLICLGTFLIGFIFTLNS) traverse the membrane as a helical segment. Topologically, residues 478-487 (GQYWLSLLDS) are extracellular. A helical membrane pass occupies residues 488 to 508 (YAVSIPLLIIAFCEMFSVVYV). Topologically, residues 509–531 (YGVDRFNKDIEFMIGHKPNIFWQ) are cytoplasmic. The chain crosses the membrane as a helical span at residues 532-552 (VTWRVVSPLLMLIILVFFFVV). Over 553–581 (QVSQELTYSIWNPGYEEFPKSQKISHPNW) the chain is Extracellular. Residues 582-602 (VYAVVVIVAGVPSLTIPSYAI) form a helical membrane-spanning segment. Residues 603–634 (YKLIRNCCQKPGDRQGLVSTLSTASMNGDLKY) lie on the Cytoplasmic side of the membrane. The residue at position 627 (S627) is a Phosphoserine.

Belongs to the sodium:neurotransmitter symporter (SNF) (TC 2.A.22) family. SLC6A19 subfamily. As to quaternary structure, interacts in a tissue-specific manner with ACE2 in small intestine and with CLTRN in the kidney. Interacts with CLTRN; this interaction is required for trafficking of SLC6A19 to the plasma membrane and for its catalytic activation in kidneys. Interacts with ACE2; this interaction is required for trafficking of SLC6A19 to the plasma membrane and for its catalytic activation in intestine. Interacts with ANPEP; the interaction positively regulates its amino acid transporter activity.

The protein localises to the membrane. The catalysed reaction is L-alanine(in) + Na(+)(in) = L-alanine(out) + Na(+)(out). The enzyme catalyses L-cysteine(in) + Na(+)(in) = L-cysteine(out) + Na(+)(out). It carries out the reaction L-glutamine(in) + Na(+)(in) = L-glutamine(out) + Na(+)(out). It catalyses the reaction glycine(in) + Na(+)(in) = glycine(out) + Na(+)(out). The catalysed reaction is L-isoleucine(in) + Na(+)(in) = L-isoleucine(out) + Na(+)(out). The enzyme catalyses L-leucine(in) + Na(+)(in) = L-leucine(out) + Na(+)(out). It carries out the reaction L-methionine(in) + Na(+)(in) = L-methionine(out) + Na(+)(out). It catalyses the reaction L-phenylalanine(in) + Na(+)(in) = L-phenylalanine(out) + Na(+)(out). The catalysed reaction is L-serine(in) + Na(+)(in) = L-serine(out) + Na(+)(out). The enzyme catalyses L-tryptophan(in) + Na(+)(in) = L-tryptophan(out) + Na(+)(out). It carries out the reaction L-tyrosine(in) + Na(+)(in) = L-tyrosine(out) + Na(+)(out). It catalyses the reaction L-valine(in) + Na(+)(in) = L-valine(out) + Na(+)(out). In terms of biological role, transporter that mediates resorption of neutral amino acids across the apical membrane of renal and intestinal epithelial cells. This uptake is sodium-dependent and chloride-independent. Requires CLTRN in kidney or ACE2 in intestine for cell surface expression and amino acid transporter activity. The sequence is that of Sodium-dependent neutral amino acid transporter B(0)AT1 (SLC6A19) from Pongo abelii (Sumatran orangutan).